Consider the following 912-residue polypeptide: Protein translocase subunit SecA (912 aa).

ATP is bound by residues glutamine 87, 105 to 109 (GEGKT), and aspartate 508. The tract at residues 855–912 (QHQDAGGYGADEEVEQMQGGNAPVPVSQVTRDEPKVGRNDPCPCGSGKKYKHCHGQLS) is disordered. Zn(2+)-binding residues include cysteine 896, cysteine 898, cysteine 907, and histidine 908. Over residues 902 to 912 (KKYKHCHGQLS) the composition is skewed to basic residues.

Belongs to the SecA family. Monomer and homodimer. Part of the essential Sec protein translocation apparatus which comprises SecA, SecYEG and auxiliary proteins SecDF-YajC and YidC. Zn(2+) is required as a cofactor.

The protein resides in the cell inner membrane. The protein localises to the cytoplasm. It carries out the reaction ATP + H2O + cellular proteinSide 1 = ADP + phosphate + cellular proteinSide 2.. Functionally, part of the Sec protein translocase complex. Interacts with the SecYEG preprotein conducting channel. Has a central role in coupling the hydrolysis of ATP to the transfer of proteins into and across the cell membrane, serving both as a receptor for the preprotein-SecB complex and as an ATP-driven molecular motor driving the stepwise translocation of polypeptide chains across the membrane. The sequence is that of Protein translocase subunit SecA from Xanthomonas campestris pv. campestris (strain B100).